A 51-amino-acid polypeptide reads, in one-letter code: Insulin (51 aa).

Disulfide bonds link Cys7-Cys36, Cys19-Cys49, and Cys35-Cys40.

The protein belongs to the insulin family. Heterodimer of a B chain and an A chain linked by two disulfide bonds.

The protein localises to the secreted. Its function is as follows. Insulin decreases blood glucose concentration. It increases cell permeability to monosaccharides, amino acids and fatty acids. It accelerates glycolysis, the pentose phosphate cycle, and glycogen synthesis in liver. The sequence is that of Insulin (INS) from Myocastor coypus (Coypu).